A 388-amino-acid polypeptide reads, in one-letter code: Succinate--CoA ligase [ADP-forming] subunit beta (388 aa).

The ATP-grasp domain occupies Lys-9–Glu-244. ATP-binding positions include Lys-46, Gly-53–Gly-55, Glu-99, Ala-102, and Glu-107. 2 residues coordinate Mg(2+): Asn-199 and Asp-213. Substrate is bound by residues Asn-264 and Gly-321 to Met-323.

The protein belongs to the succinate/malate CoA ligase beta subunit family. Heterotetramer of two alpha and two beta subunits. It depends on Mg(2+) as a cofactor.

It carries out the reaction succinate + ATP + CoA = succinyl-CoA + ADP + phosphate. The catalysed reaction is GTP + succinate + CoA = succinyl-CoA + GDP + phosphate. The protein operates within carbohydrate metabolism; tricarboxylic acid cycle; succinate from succinyl-CoA (ligase route): step 1/1. In terms of biological role, succinyl-CoA synthetase functions in the citric acid cycle (TCA), coupling the hydrolysis of succinyl-CoA to the synthesis of either ATP or GTP and thus represents the only step of substrate-level phosphorylation in the TCA. The beta subunit provides nucleotide specificity of the enzyme and binds the substrate succinate, while the binding sites for coenzyme A and phosphate are found in the alpha subunit. This chain is Succinate--CoA ligase [ADP-forming] subunit beta, found in Burkholderia thailandensis (strain ATCC 700388 / DSM 13276 / CCUG 48851 / CIP 106301 / E264).